The following is a 421-amino-acid chain: Probable acid phosphatase (421 aa).

The Proton donor role is filled by D229.

It catalyses the reaction a phosphate monoester + H2O = an alcohol + phosphate. The polypeptide is Probable acid phosphatase (Kluyveromyces lactis (strain ATCC 8585 / CBS 2359 / DSM 70799 / NBRC 1267 / NRRL Y-1140 / WM37) (Yeast)).